Reading from the N-terminus, the 255-residue chain is NAD kinase (255 aa).

D44 (proton acceptor) is an active-site residue. Residues 44-45, H49, 114-115, D144, A152, 155-160, and Q216 contribute to the NAD(+) site; these read DG, NE, and SAYNLS.

Belongs to the NAD kinase family. A divalent metal cation serves as cofactor.

The protein resides in the cytoplasm. It carries out the reaction NAD(+) + ATP = ADP + NADP(+) + H(+). Functionally, involved in the regulation of the intracellular balance of NAD and NADP, and is a key enzyme in the biosynthesis of NADP. Catalyzes specifically the phosphorylation on 2'-hydroxyl of the adenosine moiety of NAD to yield NADP. The polypeptide is NAD kinase (Rickettsia canadensis (strain McKiel)).